The following is a 125-amino-acid chain: Small ribosomal subunit protein uS12 (125 aa).

Aspartate 89 is subject to 3-methylthioaspartic acid. The tract at residues glycine 100–alanine 125 is disordered. Residues lysine 111–alanine 125 are compositionally biased toward basic residues.

It belongs to the universal ribosomal protein uS12 family. As to quaternary structure, part of the 30S ribosomal subunit. Contacts proteins S8 and S17. May interact with IF1 in the 30S initiation complex.

Its function is as follows. With S4 and S5 plays an important role in translational accuracy. Interacts with and stabilizes bases of the 16S rRNA that are involved in tRNA selection in the A site and with the mRNA backbone. Located at the interface of the 30S and 50S subunits, it traverses the body of the 30S subunit contacting proteins on the other side and probably holding the rRNA structure together. The combined cluster of proteins S8, S12 and S17 appears to hold together the shoulder and platform of the 30S subunit. This Thioalkalivibrio sulfidiphilus (strain HL-EbGR7) protein is Small ribosomal subunit protein uS12.